The following is a 177-amino-acid chain: Translation initiation factor IF-3 (177 aa).

This sequence belongs to the IF-3 family. As to quaternary structure, monomer.

Its subcellular location is the cytoplasm. In terms of biological role, IF-3 binds to the 30S ribosomal subunit and shifts the equilibrium between 70S ribosomes and their 50S and 30S subunits in favor of the free subunits, thus enhancing the availability of 30S subunits on which protein synthesis initiation begins. The polypeptide is Translation initiation factor IF-3 (Clostridium perfringens (strain 13 / Type A)).